A 168-amino-acid polypeptide reads, in one-letter code: Photosystem I assembly protein Ycf3 (168 aa).

TPR repeat units follow at residues 35–68 (AFTYYRDGMSAQSEGNYAEALQNYYEATRPEIDP), 72–105 (SYILYNIGLIHTSNGEHTKALEYYFRALERNPFL), and 120–153 (GEQAIRQGDSEIAEAWSDQAAEYWKQAIALTPGN).

Belongs to the Ycf3 family.

It is found in the plastid. Its subcellular location is the chloroplast thylakoid membrane. In terms of biological role, essential for the assembly of the photosystem I (PSI) complex. May act as a chaperone-like factor to guide the assembly of the PSI subunits. The polypeptide is Photosystem I assembly protein Ycf3 (Illicium oligandrum (Star anise)).